We begin with the raw amino-acid sequence, 418 residues long: Glutamyl-tRNA(Gln) amidotransferase subunit D (418 aa).

In terms of domain architecture, Asparaginase/glutaminase spans 81–407; it reads PDVKIISTGG…EEAKEMVKKS (327 aa). Active-site residues include Thr-91, Thr-166, Asp-167, and Lys-243.

The protein belongs to the asparaginase 1 family. GatD subfamily. In terms of assembly, heterodimer of GatD and GatE.

The catalysed reaction is L-glutamyl-tRNA(Gln) + L-glutamine + ATP + H2O = L-glutaminyl-tRNA(Gln) + L-glutamate + ADP + phosphate + H(+). Functionally, allows the formation of correctly charged Gln-tRNA(Gln) through the transamidation of misacylated Glu-tRNA(Gln) in organisms which lack glutaminyl-tRNA synthetase. The reaction takes place in the presence of glutamine and ATP through an activated gamma-phospho-Glu-tRNA(Gln). The GatDE system is specific for glutamate and does not act on aspartate. This Archaeoglobus fulgidus (strain ATCC 49558 / DSM 4304 / JCM 9628 / NBRC 100126 / VC-16) protein is Glutamyl-tRNA(Gln) amidotransferase subunit D.